We begin with the raw amino-acid sequence, 401 residues long: Argininosuccinate synthase (401 aa).

Position 9–17 (9–17 (AYSGGLDTS)) interacts with ATP. Tyr86 provides a ligand contact to L-citrulline. Gly116 is a binding site for ATP. Thr118, Asn122, and Asp123 together coordinate L-aspartate. Asn122 is an L-citrulline binding site. Residues Arg126, Ser174, Ser183, Glu259, and Tyr271 each coordinate L-citrulline.

Belongs to the argininosuccinate synthase family. Type 1 subfamily. In terms of assembly, homotetramer.

It localises to the cytoplasm. It carries out the reaction L-citrulline + L-aspartate + ATP = 2-(N(omega)-L-arginino)succinate + AMP + diphosphate + H(+). Its pathway is amino-acid biosynthesis; L-arginine biosynthesis; L-arginine from L-ornithine and carbamoyl phosphate: step 2/3. The protein is Argininosuccinate synthase of Bacillus thuringiensis subsp. konkukian (strain 97-27).